The chain runs to 199 residues: Acireductone dioxygenase 2 (199 aa).

Fe(2+) is bound by residues H98, H100, E104, and H143. 4 residues coordinate Ni(2+): H98, H100, E104, and H143.

The protein belongs to the acireductone dioxygenase (ARD) family. Fe(2+) is required as a cofactor. It depends on Ni(2+) as a cofactor.

It localises to the cytoplasm. The protein resides in the nucleus. It catalyses the reaction 1,2-dihydroxy-5-(methylsulfanyl)pent-1-en-3-one + O2 = 4-methylsulfanyl-2-oxobutanoate + formate + 2 H(+). The enzyme catalyses 1,2-dihydroxy-5-(methylsulfanyl)pent-1-en-3-one + O2 = 3-(methylsulfanyl)propanoate + CO + formate + 2 H(+). The protein operates within amino-acid biosynthesis; L-methionine biosynthesis via salvage pathway; L-methionine from S-methyl-5-thio-alpha-D-ribose 1-phosphate: step 5/6. Catalyzes 2 different reactions between oxygen and the acireductone 1,2-dihydroxy-3-keto-5-methylthiopentene (DHK-MTPene) depending upon the metal bound in the active site. Fe-containing acireductone dioxygenase (Fe-ARD) produces formate and 2-keto-4-methylthiobutyrate (KMTB), the alpha-ketoacid precursor of methionine in the methionine recycle pathway. Ni-containing acireductone dioxygenase (Ni-ARD) produces methylthiopropionate, carbon monoxide and formate, and does not lie on the methionine recycle pathway. This Vitis vinifera (Grape) protein is Acireductone dioxygenase 2.